The following is a 274-amino-acid chain: Major capsid protein (274 aa).

It is found in the virion. Its function is as follows. Assembles to form an icosahedral capsid. This is Major capsid protein from Staphylococcus phage phiMR11.